The primary structure comprises 1207 residues: Histidine kinase 1 (1207 aa).

Polar residues predominate over residues 1–10 (MRGDSFSMSI). The segment at 1-20 (MRGDSFSMSIENLPDSPMGS) is disordered. The Cytoplasmic segment spans residues 1–81 (MRGDSFSMSI…SSYYSVFVVR (81 aa)). Residues 82–102 (LAIMVMLAILIGLLTVLTWHF) form a helical membrane-spanning segment. Over 103-446 (TRIYTKQSLQ…GKVDERAFKT (344 aa)) the chain is Extracellular. Residues 447–467 (LIILISASVCIFFIGCVCILI) form a helical membrane-spanning segment. At 468-1207 (LTNGVSKEMK…PSAFQTSLSA (740 aa)) the chain is on the cytoplasmic side. The region spanning 505–763 (NMSHELRTPM…LMRLYLILST (259 aa)) is the Histidine kinase domain. A Phosphohistidine; by autocatalysis modification is found at histidine 508. 2 disordered regions span residues 964-987 (DTCS…VKPS) and 1000-1021 (DATT…PEEE). Residues 975–984 (SGEKQVDKSV) show a composition bias toward basic and acidic residues. Low complexity predominate over residues 1000–1014 (DATTSNDDSTSASMT). The region spanning 1045-1196 (RILLAEDTPV…LMVSTILSLT (152 aa)) is the Response regulatory domain. Aspartate 1127 is subject to 4-aspartylphosphate.

As to quaternary structure, interacts with AHP2, depending of the phosphorylation state of Asp-1075 in the receiver domain, but probably not with AHP1 and AHP3. Post-translationally, autophosphorylated predominantly on His residues. Activation probably requires a transfer of a phosphate group between a His in the transmitter domain and an Asp of the receiver domain. As to expression, mostly expressed in roots, and, to a lower extent, in stems, leaves and flowers.

The protein resides in the cell membrane. The catalysed reaction is ATP + protein L-histidine = ADP + protein N-phospho-L-histidine.. In terms of biological role, functions as an osmosensor histidine kinase that detects water stress and transmits the stress signal to a downstream MAPK cascade. This protein undergoes an ATP-dependent autophosphorylation at a conserved histidine residue in the kinase core, and a phosphoryl group is then transferred to a conserved aspartate residue in the receiver domain. Positive regulator of drought and salt stress responses, and abscisic acid (ABA) signaling. Confers drought tolerance, probably by regulating levels of ABA accumulation. Plays a redundant role in regulating plant growth and development. Required for the regulation of desiccation processes during seed formation. The chain is Histidine kinase 1 (AHK1) from Arabidopsis thaliana (Mouse-ear cress).